We begin with the raw amino-acid sequence, 356 residues long: Homoserine O-acetyltransferase (356 aa).

One can recognise an AB hydrolase-1 domain in the interval 50 to 335 (NVILVCHALT…DEPYGHDAFL (286 aa)). Residue S146 is the Nucleophile of the active site. Position 215 (R215) interacts with substrate. Active-site residues include D302 and H331. D332 is a substrate binding site.

This sequence belongs to the AB hydrolase superfamily. MetX family. Homodimer.

The protein resides in the cytoplasm. It catalyses the reaction L-homoserine + acetyl-CoA = O-acetyl-L-homoserine + CoA. The protein operates within amino-acid biosynthesis; L-methionine biosynthesis via de novo pathway; O-acetyl-L-homoserine from L-homoserine: step 1/1. In terms of biological role, transfers an acetyl group from acetyl-CoA to L-homoserine, forming acetyl-L-homoserine. This chain is Homoserine O-acetyltransferase, found in Chlorobaculum tepidum (strain ATCC 49652 / DSM 12025 / NBRC 103806 / TLS) (Chlorobium tepidum).